A 423-amino-acid chain; its full sequence is MKVDFEFVSTHRNRTLWPNPCCFEVGWSSTAPSNAINAYDPVSDQVPLLVWVGSDQKVTGKLIAHVGDWMVVAFPIGAVSPKVNNYRGMQLSMGSVVTRIVANRRVSSDAQWDYFKVQIDPSLEQQVPDSVVSLEPISVPGTWFVPGGSDVVNAYSGMYLYNETLGQWVVIRAYDHTFHLAIPDSIMTGWDVTHQYSIRPQLPSLSNFLLDAGSTTTLIATRLASHARLGDWIRIVTTGECAKVVNVLDGSIGVSPPLSRAFFAGTPVELLGQIYDNYQTLSYPGLVIGNQEQSAYQVTLVSAFIPNVETENGGYPNEYPFLYVEFSDTHYPYQNNLFSNNHSNKSWFKVTTPTGLYQSKERWIKFTGDYSFKTIRFKPTSNFRIVWRTPSGAEVKFTQPDTQSPSSPDPSLQTFIQFNMFKV.

The protein belongs to the IIV-6 198R family.

This is an uncharacterized protein from Aedes vexans (Inland floodwater mosquito).